The primary structure comprises 265 residues: F-box only protein 6 (265 aa).

Residues 3–50 (LVSINQLPENILLEVFMHVPARQLLRNCRPVCCLWRDLIDLVSLWKRK) form the F-box domain. Residues 71-252 (FYFLCSLRRN…VTNSSVVISH (182 aa)) form the FBA domain. S251 is subject to Phosphoserine.

In terms of assembly, part of a SCF (SKP1-cullin-F-box) protein ligase complex. Interacts with VCP, CHEK1 and CUL1.

It localises to the cytoplasm. It participates in protein modification; protein ubiquitination. In terms of biological role, substrate-recognition component of some SCF (SKP1-CUL1-F-box protein)-type E3 ubiquitin ligase complexes. Involved in endoplasmic reticulum-associated degradation pathway (ERAD) for misfolded lumenal proteins by recognizing and binding sugar chains on unfolded glycoproteins that are retrotranslocated into the cytosol and promoting their ubiquitination and subsequent degradation. Able to recognize and bind denatured glycoproteins, which are modified with not only high-mannose but also complex-type oligosaccharides. Also recognizes sulfated glycans. Also involved in DNA damage response by specifically recognizing activated CHEK1 (phosphorylated on 'Ser-345'), promoting its ubiquitination and degradation. Ubiquitination of CHEK1 is required to ensure that activated CHEK1 does not accumulate as cells progress through S phase, or when replication forks encounter transient impediments during normal DNA replication. This chain is F-box only protein 6 (FBXO6), found in Bos taurus (Bovine).